The primary structure comprises 324 residues: THUMP domain-containing protein 1 homolog (324 aa).

Disordered stretches follow at residues 1–24 and 67–104; these read MEPASKKSKMGKNVKFNNNKKKYF and SEKPENEPEKKQPEEGAGGDAGEDDPKPAAGGTSDDDD. Basic and acidic residues predominate over residues 68–80; it reads EKPENEPEKKQPE. The residue at position 99 (T99) is a Phosphothreonine. The residue at position 100 (S100) is a Phosphoserine. One can recognise a THUMP domain in the interval 154-260; sequence DIATTGKSMS…RGWCLLSVID (107 aa). The segment at 275–324 is disordered; that stretch reads NPSDKKSSGEGDSKSETSEVANGNDKEQAESSEESKSNDDENKDSTENDK. 2 stretches are compositionally biased toward basic and acidic residues: residues 277-291 and 298-324; these read SDKKSSGEGDSKSET and NDKEQAESSEESKSNDDENKDSTENDK.

This sequence belongs to the THUMPD1 family.

This chain is THUMP domain-containing protein 1 homolog, found in Drosophila melanogaster (Fruit fly).